A 337-amino-acid chain; its full sequence is Glutathione transferase 3 (337 aa).

Over 1–239 (MPTKSTFSRW…NKYQYTLDFC (239 aa)) the chain is Cytoplasmic. 4 positions are modified to phosphoserine: Ser-66, Ser-72, Ser-99, and Ser-116. Residues 66 to 95 (SMTVDQSKDERNEYGSGSGNGSGSGSCDTA) are disordered. The interval 107–132 (KEDDDEKPQSGDETSATKPLSSRNAN) is disordered. The span at 117-132 (GDETSATKPLSSRNAN) shows a compositional bias: polar residues. Residues 240–260 (LPILTWLLFFRGIPTLVSYYI) traverse the membrane as a helical segment. Residues 261–313 (NFIRYDLNIELDPMTFNLTKFLISLAIFKTCNNKNIDFHSFRCVNQLWTQLCT) are Perinuclear space-facing. A helical transmembrane segment spans residues 314-336 (VNRSLGMVPLVFSMVSCLLTLYV). Leu-337 is a topological domain (cytoplasmic).

Its subcellular location is the nucleus membrane. This chain is Glutathione transferase 3 (GTT3), found in Saccharomyces cerevisiae (strain ATCC 204508 / S288c) (Baker's yeast).